Reading from the N-terminus, the 634-residue chain is Probable potassium transport system protein Kup (634 aa).

Transmembrane regions (helical) follow at residues 19 to 39 (AIGL…TSPL), 62 to 82 (VLSL…VIFV), 113 to 133 (FVVV…MITP), 150 to 170 (GLEH…FLIQ), 177 to 197 (IGIL…ALGV), 225 to 245 (IGVA…ALYA), 259 to 279 (WFLL…ATIL), 291 to 311 (LLAP…ATVI), 349 to 369 (IYIG…VLGF), 379 to 399 (YGVA…VVIW), 406 to 426 (LWLG…FFAA), and 431 to 451 (VIQG…LMST).

This sequence belongs to the HAK/KUP transporter (TC 2.A.72) family.

The protein resides in the cell inner membrane. The catalysed reaction is K(+)(in) + H(+)(in) = K(+)(out) + H(+)(out). Functionally, transport of potassium into the cell. Likely operates as a K(+):H(+) symporter. The protein is Probable potassium transport system protein Kup of Pseudomonas aeruginosa (strain LESB58).